The chain runs to 435 residues: Flavonol 7-O-rhamnosyltransferase (435 aa).

UDP is bound at residue Gln-18. A UDP-beta-L-rhamnose-binding site is contributed by Gln-18. The active-site Proton acceptor is His-21. His-21 contributes to the quercetin binding site. Residue Asp-119 is the Charge relay of the active site. Positions 250, 315, 332, 336, 337, and 340 each coordinate UDP. Residues Ser-250, Ala-315, His-332, Gly-336, Ser-337, and Glu-340 each coordinate UDP-beta-L-rhamnose.

This sequence belongs to the UDP-glycosyltransferase family. As to expression, highly expressed in floral buds. Expressed in stems, leaves and flowers. Expressed at low levels in roots and siliques. Expressed on the adaxial side of cotyledons and emerging leaves, in trichomes, root columella cells, and the late elongation/early differentiation zone of roots.

The catalysed reaction is quercitrin + UDP-beta-L-rhamnose = quercetin 3,7-bis-O-alpha-L-rhamnoside + UDP + H(+). The enzyme catalyses quercetin 3-O-beta-D-glucoside + UDP-beta-L-rhamnose = quercetin 3-O-beta-D-glucoside-7-O-alpha-L-rhamnoside + UDP + H(+). It functions in the pathway flavonoid metabolism. Its function is as follows. Flavonol 7-O-rhamnosyltransferase that catalyzes the transfer of rhamnose from UDP-rhamnose to the 7-OH position of 3-O-glycosylated flavonols, such as kaempferol 3-O-rhamnoside, kaempferol 3-O-glucoside, quercetin 3-O-glucoside, quercetin 3-O-galactoside, quercetin 3-O-rhamnoside and isorhamnetin 3-O-glucoside. Is able to glycosylate the flavonols quercetin and kaempferol to yield quercetin 7-O-rhamnoside and kaempferol 7-O-rhamnoside. Shows a strict specificity for UDP-rhamnose as sugar donor. Does not act on 3-O-glycosylated anthocyanins. The accumulation of kaempferol 3-O-rhamnoside-7-O-rhamnoside inhibits basipetal auxin transport, which influences auxin distribution and plant organ development. This is Flavonol 7-O-rhamnosyltransferase from Arabidopsis thaliana (Mouse-ear cress).